The primary structure comprises 68 residues: Amphipathic peptide VmCT1 (68 aa).

The N-terminal stretch at 1–23 is a signal peptide; sequence MKTQFVILIVAVVLLQLISHSEA. Phenylalanine 36 is subject to Phenylalanine amide. A propeptide spanning residues 40 to 68 is cleaved from the precursor; it reads GLRNFDDLDDTFEPEMSEADLKYLQDLLR.

The protein belongs to the non-disulfide-bridged peptide (NDBP) superfamily. Short antimicrobial peptide (group 4) family. In terms of tissue distribution, expressed by the venom gland.

It is found in the secreted. The protein localises to the target cell membrane. Cationic amphipathic peptide with antibacterial activities against both Gram-positive and Gram-negative bacteria. Also shows antifungal activities. Is mildly hemolytic against human erythrocytes. In addition, when tested in vitro on the parasite Trypanosoma cruzi (responsible of the Chagas disease), is able to reduce the number of the three forms (epimastigote, trypomastigote and amastigote). Also shows antiplasmodial and cytotoxic activity (tested on Plasmodium gallinaceum, and MCF-7 breast cancer cell line). The chain is Amphipathic peptide VmCT1 from Vaejovis mexicanus smithi (Mexican scorpion).